The sequence spans 397 residues: Elongation factor Tu 2 (397 aa).

Residues Lys-10–Val-206 form the tr-type G domain. The segment at Gly-19 to Thr-26 is G1. Gly-19–Thr-26 is a GTP binding site. Thr-26 serves as a coordination point for Mg(2+). Residues Gly-61–Ser-65 are G2. Residues Asp-82–Gly-85 form a G3 region. Residues Asp-82–His-86 and Asn-137–Asp-140 contribute to the GTP site. The interval Asn-137–Asp-140 is G4. Residues Ser-175 to Leu-177 form a G5 region.

It belongs to the TRAFAC class translation factor GTPase superfamily. Classic translation factor GTPase family. EF-Tu/EF-1A subfamily. Monomer.

It is found in the cytoplasm. It catalyses the reaction GTP + H2O = GDP + phosphate + H(+). Functionally, GTP hydrolase that promotes the GTP-dependent binding of aminoacyl-tRNA to the A-site of ribosomes during protein biosynthesis. This Alkaliphilus metalliredigens (strain QYMF) protein is Elongation factor Tu 2.